The primary structure comprises 308 residues: Cytochrome b (308 aa).

Helical transmembrane passes span Phe-1–Thr-21, Trp-45–Ile-66, Trp-81–Leu-101, and Phe-146–Thr-166. Positions 51 and 65 each coordinate heme b. Heme b-binding residues include His-150 and His-164. His-169 is a binding site for a ubiquinone. 3 helical membrane passes run Met-194–Ser-214, Leu-256–His-276, and Leu-288–Ser-308.

The protein belongs to the cytochrome b family. As to quaternary structure, the cytochrome bc1 complex contains 11 subunits: 3 respiratory subunits (MT-CYB, CYC1 and UQCRFS1), 2 core proteins (UQCRC1 and UQCRC2) and 6 low-molecular weight proteins (UQCRH/QCR6, UQCRB/QCR7, UQCRQ/QCR8, UQCR10/QCR9, UQCR11/QCR10 and a cleavage product of UQCRFS1). This cytochrome bc1 complex then forms a dimer. It depends on heme b as a cofactor.

The protein resides in the mitochondrion inner membrane. In terms of biological role, component of the ubiquinol-cytochrome c reductase complex (complex III or cytochrome b-c1 complex) that is part of the mitochondrial respiratory chain. The b-c1 complex mediates electron transfer from ubiquinol to cytochrome c. Contributes to the generation of a proton gradient across the mitochondrial membrane that is then used for ATP synthesis. The chain is Cytochrome b (MT-CYB) from Amblyornis macgregoriae (Macgregor's bowerbird).